The primary structure comprises 3023 residues: Genome polyprotein (3023 aa).

One can recognise a Peptidase S30 domain in the interval 132 to 274; the sequence is TCSSSGLDNL…QSITLRATHF (143 aa). Active-site for P1 proteinase activity residues include His183, Asp192, and Ser225. Positions 325-328 match the Involved in interaction with stylet and aphid transmission motif; that stretch reads KITC. Positions 583–585 match the Involved in virions binding and aphid transmission motif; that stretch reads PTK. One can recognise a Peptidase C6 domain in the interval 609–731; that stretch reads MYIAKEGYCY…ESPMAQYKVG (123 aa). Catalysis depends on for helper component proteinase activity residues Cys617 and His690. A Helicase ATP-binding domain is found at 1202–1354; it reads QIAHNEHKDI…TQYPVELLIE (153 aa). 1215-1222 is an ATP binding site; the sequence is GAVGSGKS. The DEFH box motif lies at 1304 to 1307; sequence DEFH. The region spanning 1367–1532 is the Helicase C-terminal domain; it reads GTDAHADVVK…GLPVTTQNVS (166 aa). Residues 1796 to 1800 carry the GxxxG motif motif; that stretch reads GIGLG. Positions 1856-1863 match the Nuclear localization signal motif; that stretch reads KKGKSKGK. The residue at position 1878 (Tyr1878) is an O-(5'-phospho-RNA)-tyrosine. The residue at position 1878 (Tyr1878) is an O-UMP-tyrosine; transient. The region spanning 2002-2218 is the Peptidase C4 domain; sequence SKALLKGVRD…ISWGSFTLVE (217 aa). Catalysis depends on for nuclear inclusion protein A activity residues His2047, Asp2082, and Cys2152. One can recognise a RdRp catalytic domain in the interval 2484–2608; the sequence is WVYCDADGSQ…AISPELEHVL (125 aa). A Phosphothreonine modification is found at Thr3006.

It belongs to the potyviridae genome polyprotein family. Interacts with host eIF4E protein (via cap-binding region); this interaction mediates the translation of the VPg-viral RNA conjugates. Part of a complex that comprises VPg, RNA, host EIF4E and EIF4G; this interaction mediates the translation of the VPg-viral RNA conjugates. VPg is uridylylated by the polymerase and is covalently attached to the 5'-end of the genomic RNA. This uridylylated form acts as a nucleotide-peptide primer for the polymerase. Post-translationally, potyviral RNA is expressed as two polyproteins which undergo post-translational proteolytic processing. Genome polyprotein is processed by NIa-pro, P1 and HC-pro proteinases resulting in the production of at least ten individual proteins. P3N-PIPO polyprotein is cleaved by P1 and HC-pro proteinases resulting in the production of three individual proteins. The P1 proteinase and the HC-pro cleave only their respective C-termini autocatalytically. 6K1 is essential for proper proteolytic separation of P3 from CI.

Its subcellular location is the host cytoplasmic vesicle. The protein localises to the host nucleus. It localises to the virion. The catalysed reaction is RNA(n) + a ribonucleoside 5'-triphosphate = RNA(n+1) + diphosphate. It carries out the reaction Hydrolyzes glutaminyl bonds, and activity is further restricted by preferences for the amino acids in P6 - P1' that vary with the species of potyvirus, e.g. Glu-Xaa-Xaa-Tyr-Xaa-Gln-|-(Ser or Gly) for the enzyme from tobacco etch virus. The natural substrate is the viral polyprotein, but other proteins and oligopeptides containing the appropriate consensus sequence are also cleaved.. The enzyme catalyses Hydrolyzes a Gly-|-Gly bond at its own C-terminus, commonly in the sequence -Tyr-Xaa-Val-Gly-|-Gly, in the processing of the potyviral polyprotein.. Required for aphid transmission and also has proteolytic activity. Only cleaves a Gly-Gly dipeptide at its own C-terminus. Interacts with virions and aphid stylets. Acts as a suppressor of RNA-mediated gene silencing, also known as post-transcriptional gene silencing (PTGS), a mechanism of plant viral defense that limits the accumulation of viral RNAs. May have RNA-binding activity. Functionally, has helicase activity. It may be involved in replication. In terms of biological role, indispensable for virus replication. Reduces the abundance of host transcripts related to jasmonic acid biosynthesis therefore altering the host defenses. In order to increase its own stability, decreases host protein degradation pathways. Its function is as follows. Indispensable for virus replication. Mediates the cap-independent, EIF4E-dependent translation of viral genomic RNAs. Binds to the cap-binding site of host EIF4E and thus interferes with the host EIF4E-dependent mRNA export and translation. VPg-RNA directly binds EIF4E and is a template for transcription. Also forms trimeric complexes with EIF4E-EIF4G, which are templates for translation. Functionally, has RNA-binding and proteolytic activities. Main protease that processes most of the polyprotein cleavages. In terms of biological role, an RNA-dependent RNA polymerase that plays an essential role in the virus replication. Its function is as follows. Involved in aphid transmission, cell-to-cell and systemis movement, encapsidation of the viral RNA and in the regulation of viral RNA amplification. This Tobacco vein mottling virus (TVMV) protein is Genome polyprotein.